The following is a 322-amino-acid chain: AA9 family lytic polysaccharide monooxygenase A (322 aa).

The first 15 residues, 1–15, serve as a signal peptide directing secretion; that stretch reads MKVLSLLAAASAASA. Histidine 16 and histidine 96 together coordinate Cu(2+). Cystine bridges form between cysteine 54/cysteine 182 and cysteine 152/cysteine 237. O2-binding residues include histidine 168 and glutamine 177. Threonine 228 and threonine 236 each carry an O-linked (Man...) threonine glycan. The 37-residue stretch at 286 to 322 folds into the CBM1 domain; it reads CTAAQWAQCGGMGFSGCTTCASPYTCKKMNDYYSQCS.

This sequence belongs to the polysaccharide monooxygenase AA9 family. It depends on Cu(2+) as a cofactor.

The protein localises to the secreted. It carries out the reaction [(1-&gt;4)-beta-D-glucosyl]n+m + reduced acceptor + O2 = 4-dehydro-beta-D-glucosyl-[(1-&gt;4)-beta-D-glucosyl]n-1 + [(1-&gt;4)-beta-D-glucosyl]m + acceptor + H2O.. Its function is as follows. Lytic polysaccharide monooxygenase (LPMO) that depolymerizes crystalline and amorphous polysaccharides via the oxidation of scissile alpha- or beta-(1-4)-glycosidic bonds, yielding C4 oxidation products. Catalysis by LPMOs requires the reduction of the active-site copper from Cu(II) to Cu(I) by a reducing agent and H(2)O(2) or O(2) as a cosubstrate. Active on tamarind xyloglucan and konjac glucomannan. The chain is AA9 family lytic polysaccharide monooxygenase A (gh61-1) from Neurospora crassa (strain ATCC 24698 / 74-OR23-1A / CBS 708.71 / DSM 1257 / FGSC 987).